A 151-amino-acid chain; its full sequence is Small ribosomal subunit protein uS19 (151 aa).

The residue at position 2 (Ala2) is an N-acetylalanine.

This sequence belongs to the universal ribosomal protein uS19 family.

Its function is as follows. Negatively regulates lifespan. The polypeptide is Small ribosomal subunit protein uS19 (Caenorhabditis elegans).